The chain runs to 520 residues: Lysine--tRNA ligase (520 aa).

The interval 1–21 (MSDHLIPSIPTPAAAPAAAPA) is disordered. Over residues 12-21 (PAAAPAAAPA) the composition is skewed to low complexity. Positions 430 and 437 each coordinate Mg(2+).

The protein belongs to the class-II aminoacyl-tRNA synthetase family. Homodimer. It depends on Mg(2+) as a cofactor.

It is found in the cytoplasm. It catalyses the reaction tRNA(Lys) + L-lysine + ATP = L-lysyl-tRNA(Lys) + AMP + diphosphate. This chain is Lysine--tRNA ligase, found in Variovorax paradoxus (strain S110).